A 776-amino-acid chain; its full sequence is Homoaconitase, mitochondrial (776 aa).

Residues 1-38 constitute a mitochondrion transit peptide; sequence MQSRLVSQSGLGRRWAVLRCALSKTYQRRTLTSTRRQF. [4Fe-4S] cluster contacts are provided by Cys-394, Cys-463, and Cys-466.

Belongs to the aconitase/IPM isomerase family. [4Fe-4S] cluster is required as a cofactor.

The protein localises to the mitochondrion. The enzyme catalyses (2R,3S)-homoisocitrate = cis-homoaconitate + H2O. It functions in the pathway amino-acid biosynthesis; L-lysine biosynthesis via AAA pathway; L-alpha-aminoadipate from 2-oxoglutarate: step 3/5. Its function is as follows. Catalyzes the reversible hydration of cis-homoaconitate to (2R,3S)-homoisocitrate, a step in the alpha-aminoadipate pathway for lysine biosynthesis. This is Homoaconitase, mitochondrial (lys4) from Emericella nidulans (strain FGSC A4 / ATCC 38163 / CBS 112.46 / NRRL 194 / M139) (Aspergillus nidulans).